The sequence spans 1378 residues: DNA-directed RNA polymerase subunit beta (1378 aa).

The protein belongs to the RNA polymerase beta chain family. The RNAP catalytic core consists of 2 alpha, 1 beta, 1 beta' and 1 omega subunit. When a sigma factor is associated with the core the holoenzyme is formed, which can initiate transcription.

It carries out the reaction RNA(n) + a ribonucleoside 5'-triphosphate = RNA(n+1) + diphosphate. Functionally, DNA-dependent RNA polymerase catalyzes the transcription of DNA into RNA using the four ribonucleoside triphosphates as substrates. In Campylobacter jejuni (strain RM1221), this protein is DNA-directed RNA polymerase subunit beta.